The following is a 586-amino-acid chain: Potassium-transporting ATPase potassium-binding subunit (586 aa).

12 helical membrane-spanning segments follow: residues 11-31, 67-87, 136-156, 179-199, 279-299, 306-326, 351-371, 381-401, 403-423, 442-462, 507-527, and 551-571; these read LFLV…AKVF, AVAV…ILML, GLAV…IAVI, LYVL…QGVI, VEIF…GVMV, WAIL…LQGV, FGLA…CGAV, LGGM…GGVG, GLYT…LMIG, IITV…AMIT, ILGS…VLAM, and FALW…FPAL.

Belongs to the KdpA family. As to quaternary structure, the system is composed of three essential subunits: KdpA, KdpB and KdpC.

The protein resides in the cell inner membrane. Part of the high-affinity ATP-driven potassium transport (or Kdp) system, which catalyzes the hydrolysis of ATP coupled with the electrogenic transport of potassium into the cytoplasm. This subunit binds the periplasmic potassium ions and delivers the ions to the membrane domain of KdpB through an intramembrane tunnel. This chain is Potassium-transporting ATPase potassium-binding subunit, found in Geobacter metallireducens (strain ATCC 53774 / DSM 7210 / GS-15).